The following is a 37-amino-acid chain: Large ribosomal subunit protein bL36 (37 aa).

This sequence belongs to the bacterial ribosomal protein bL36 family.

The sequence is that of Large ribosomal subunit protein bL36 from Marinomonas sp. (strain MWYL1).